A 691-amino-acid chain; its full sequence is Choline transporter-like 1 (691 aa).

The segment covering 1-10 has biased composition (basic and acidic residues); it reads MGCAESKDGE. A disordered region spans residues 1–20; that stretch reads MGCAESKDGEGEAQNNRPKY. Helical transmembrane passes span 28 to 48, 205 to 225, and 232 to 252; these read WLAI…FSFV, WHII…LVTM, and IVSW…TVAL. Asn-261 is a glycosylation site (N-linked (GlcNAc...) asparagine). 2 helical membrane passes run 282–302 and 332–352; these read VLTL…VIYF and LLAF…IICL. The N-linked (GlcNAc...) asparagine glycan is linked to Asn-385. 4 helical membrane passes run 408-428, 527-547, 562-582, and 591-611; these read SMFW…FACQ, VVAI…NAMA, FILF…GIVL, and FYMA…HIIL.

Belongs to the CTL (choline transporter-like) family.

It is found in the membrane. This Drosophila melanogaster (Fruit fly) protein is Choline transporter-like 1.